The following is a 575-amino-acid chain: Protein NRT1/ PTR FAMILY 5.6 (575 aa).

Transmembrane regions (helical) follow at residues 44-64 (AALF…GLAT) and 88-108 (WSGV…AYLG). Threonine 112 is subject to Phosphothreonine. 10 helical membrane-spanning segments follow: residues 113 to 133 (VLVA…SWFI), 153 to 173 (VAFF…KPSL), 195 to 215 (FFNW…TAVA), 223 to 243 (WGVA…IFFI), 339 to 359 (LIIN…CATQ), 375 to 395 (IGGF…TLII), 420 to 440 (ILQR…IAAL), 457 to 477 (VIWL…TLVG), 493 to 513 (LGIA…NLLI), and 541 to 561 (FYWF…IVAK).

This sequence belongs to the major facilitator superfamily. Proton-dependent oligopeptide transporter (POT/PTR) (TC 2.A.17) family. In terms of tissue distribution, expressed in stems, shoots, leaves, flowers and siliques.

The protein resides in the membrane. The chain is Protein NRT1/ PTR FAMILY 5.6 (NPF5.6) from Arabidopsis thaliana (Mouse-ear cress).